A 290-amino-acid polypeptide reads, in one-letter code: S-methyl-5'-thioadenosine phosphorylase 2 (290 aa).

Phosphate-binding positions include S14, 57 to 58 (RH), and 90 to 91 (SA). M185 provides a ligand contact to substrate. Position 186 (S186) interacts with phosphate. 209–211 (DYD) is a binding site for substrate.

This sequence belongs to the PNP/MTAP phosphorylase family. MTAP subfamily. As to quaternary structure, homotrimer.

It localises to the cytoplasm. The protein resides in the nucleus. The catalysed reaction is S-methyl-5'-thioadenosine + phosphate = 5-(methylsulfanyl)-alpha-D-ribose 1-phosphate + adenine. The protein operates within amino-acid biosynthesis; L-methionine biosynthesis via salvage pathway; S-methyl-5-thio-alpha-D-ribose 1-phosphate from S-methyl-5'-thioadenosine (phosphorylase route): step 1/1. In terms of biological role, catalyzes the reversible phosphorylation of S-methyl-5'-thioadenosine (MTA) to adenine and 5-methylthioribose-1-phosphate. Involved in the breakdown of MTA, a major by-product of polyamine biosynthesis. Responsible for the first step in the methionine salvage pathway after MTA has been generated from S-adenosylmethionine. Has broad substrate specificity with 6-aminopurine nucleosides as preferred substrates. The chain is S-methyl-5'-thioadenosine phosphorylase 2 from Puccinia graminis f. sp. tritici (strain CRL 75-36-700-3 / race SCCL) (Black stem rust fungus).